Reading from the N-terminus, the 489-residue chain is Capsid protein (489 aa).

Residues Gly79–Gln144 form a disordered region. Residues Thr81–Phe94 show a composition bias toward acidic residues. Residues Glu95–Glu110 are compositionally biased toward basic and acidic residues. The Nuclear localization signal signature appears at Arg122 to Lys125. The span at Gln135 to Gln144 shows a compositional bias: polar residues. The CCHC-type zinc finger occupies Cys412–Asn429. The tract at residues Glu467 to Asp489 is disordered.

This sequence belongs to the caulimoviridae capsid protein family. In terms of assembly, interacts (via nuclear localization signal) with host importin alpha.

Its subcellular location is the virion. The protein resides in the host nucleus. Its function is as follows. Self assembles to form an icosahedral capsid, about 50 nm in diameter, nm, composed of 420 subunits of the viral capsid protein. The capsid encapsulates the genomic dsDNA. Following virus entry into host cell, provides nuclear import of the viral genome. Virus particles do not enter the nucleus, but dock at the nuclear membrane through the interaction with host importins. This chain is Capsid protein, found in Arabidopsis thaliana (Mouse-ear cress).